The following is a 355-amino-acid chain: Ribosomal RNA large subunit methyltransferase M (355 aa).

S-adenosyl-L-methionine contacts are provided by residues serine 191, 224–227, aspartate 243, aspartate 263, and aspartate 279; that span reads APGG. The active-site Proton acceptor is lysine 308.

This sequence belongs to the class I-like SAM-binding methyltransferase superfamily. RNA methyltransferase RlmE family. RlmM subfamily. Monomer.

The protein resides in the cytoplasm. The catalysed reaction is cytidine(2498) in 23S rRNA + S-adenosyl-L-methionine = 2'-O-methylcytidine(2498) in 23S rRNA + S-adenosyl-L-homocysteine + H(+). Its function is as follows. Catalyzes the 2'-O-methylation at nucleotide C2498 in 23S rRNA. The sequence is that of Ribosomal RNA large subunit methyltransferase M from Stenotrophomonas maltophilia (strain K279a).